The sequence spans 203 residues: Endo-type membrane-bound lytic murein transglycosylase A (203 aa).

The first 15 residues, 1 to 15 (MKLRWFAFLMVLLAG), serve as a signal peptide directing secretion. The N-palmitoyl cysteine moiety is linked to residue Cys16. The S-diacylglycerol cysteine moiety is linked to residue Cys16.

It belongs to the transglycosylase Slt family.

The protein resides in the cell outer membrane. It catalyses the reaction Endolytic cleavage of the (1-&gt;4)-beta-glycosidic linkage between N-acetylmuramic acid (MurNAc) and N-acetylglucosamine (GlcNAc) residues in peptidoglycan with concomitant formation of a 1,6-anhydrobond in the MurNAc residue.. Murein-degrading enzyme. May play a role in recycling of muropeptides during cell elongation and/or cell division. Preferentially cleaves at a distance of more than two disaccharide units from the ends of the glycan chain. The sequence is that of Endo-type membrane-bound lytic murein transglycosylase A from Enterobacter sp. (strain 638).